The sequence spans 106 residues: uncharacterized protein (106 aa).

The disordered stretch occupies residues 54–106 (RSTLVATSPRRRSLVQQRRPPLREQNGGSGSSCVSSGGSASTVKTPGSRRASK). Positions 84 to 94 (SSCVSSGGSAS) are enriched in low complexity.

This is an uncharacterized protein from Human adenovirus C serotype 2 (HAdV-2).